The sequence spans 921 residues: 2-oxoadipate dehydrogenase complex component E1 (921 aa).

Lys184 and Lys189 each carry N6-succinyllysine. Positions 300-319 (GKTRGRQQSREDGDYSPNGS) are disordered. An N6-succinyllysine mark is found at Lys801 and Lys819.

The protein belongs to the alpha-ketoglutarate dehydrogenase family. As to quaternary structure, the 2-oxoadipate dehydrogenase complex is composed of OADH (2-oxoadipate dehydrogenase; E1a), DLST (dihydrolipoamide succinyltransferase; E2) and DLD (dihydrolipoamide dehydrogenase; E3). E1a functional unit is a dimer. It depends on thiamine diphosphate as a cofactor.

It localises to the mitochondrion. It carries out the reaction N(6)-[(R)-lipoyl]-L-lysyl-[protein] + 2-oxoadipate + H(+) = N(6)-[(R)-S(8)-glutaryldihydrolipoyl]-L-lysyl-[protein] + CO2. It participates in amino-acid degradation. In terms of biological role, 2-oxoadipate dehydrogenase (E1a) component of the 2-oxoadipate dehydrogenase complex (OADHC). Participates in the first step, rate limiting for the overall conversion of 2-oxoadipate (alpha-ketoadipate) to glutaryl-CoA and CO(2) catalyzed by the whole OADHC. Catalyzes the irreversible decarboxylation of 2-oxoadipate via the thiamine diphosphate (ThDP) cofactor and subsequent transfer of the decarboxylated acyl intermediate on an oxidized dihydrolipoyl group that is covalently amidated to the E2 enzyme (dihydrolipoyllysine-residue succinyltransferase or DLST). Can catalyze the decarboxylation of 2-oxoglutarate in vitro, but at a much lower rate than 2-oxoadipate. Responsible for the last step of L-lysine, L-hydroxylysine and L-tryptophan catabolism with the common product being 2-oxoadipate. The protein is 2-oxoadipate dehydrogenase complex component E1 (Dhtkd1) of Mus musculus (Mouse).